We begin with the raw amino-acid sequence, 485 residues long: E3 ubiquitin-protein ligase RNF8 (485 aa).

The region spanning 38 to 92 (VTVGRGFGVTYQLVSKICPLMISRNHCVLKQNPEGQWTIMDNKSLNGVWLNRARL) is the FHA domain. The tract at residues 68 to 72 (QNPEG) is required for interaction with PIWIL1. A Phosphoserine modification is found at Ser-157. Residues 181–220 (CESGQPVKSQGKGEVASTPSDNLDPKLTALEPSKTTGAPI) form a disordered region. An RING-type zinc finger spans residues 403 to 441 (CIICSEYFIEAVTLNCAHSFCSYCINEWMKRKIECPICR).

Belongs to the RNF8 family. In terms of assembly, homodimer. Forms a E2-E3 ubiquitin ligase complex composed of the RNF8 homodimer and a E2 heterodimer of UBE2N and UBE2V2. Interacts with class III E2s, including UBE2E1, UBE2E2, and UBE2E3 and with UBE2N. Interacts with RXRA. Interacts (via FHA domain) with ATM-phosphorylated MDC1. Interacts (via FHA domain) with 'Thr-4827' phosphorylated HERC2 (via C-terminus). Interacts with PIWIL1; leading to sequester RNF8 in the cytoplasm. Interacts with WRAP53/TCAB1. (Microbial infection) Interacts (via FHA domain) with phosphorylated human herpesvirus 1 ICP0 protein; leading to RNF8 degradation by the proteasome. Autoubiquitinated through 'Lys-48' and 'Lys-63' of ubiquitin. 'Lys-63' polyubiquitination is mediated by UBE2N. 'Lys-29'-type polyubiquitination is also observed, but it doesn't require its own functional RING-type zinc finger. In terms of tissue distribution, ubiquitous. In fetal tissues, highest expression in brain, thymus and liver. In adult tissues, highest levels in brain and testis, lowest levels in peripheral blood cells.

The protein resides in the nucleus. It localises to the cytoplasm. The protein localises to the midbody. Its subcellular location is the chromosome. It is found in the telomere. It carries out the reaction S-ubiquitinyl-[E2 ubiquitin-conjugating enzyme]-L-cysteine + [acceptor protein]-L-lysine = [E2 ubiquitin-conjugating enzyme]-L-cysteine + N(6)-ubiquitinyl-[acceptor protein]-L-lysine.. Its pathway is protein modification; protein ubiquitination. Functionally, E3 ubiquitin-protein ligase that plays a key role in DNA damage signaling via 2 distinct roles: by mediating the 'Lys-63'-linked ubiquitination of histones H2A and H2AX and promoting the recruitment of DNA repair proteins at double-strand breaks (DSBs) sites, and by catalyzing 'Lys-48'-linked ubiquitination to remove target proteins from DNA damage sites. Following DNA DSBs, it is recruited to the sites of damage by ATM-phosphorylated MDC1 and catalyzes the 'Lys-63'-linked ubiquitination of histones H2A and H2AX, thereby promoting the formation of TP53BP1 and BRCA1 ionizing radiation-induced foci (IRIF). Also controls the recruitment of UIMC1-BRCC3 (RAP80-BRCC36) and PAXIP1/PTIP to DNA damage sites. Promotes the recruitment of NBN to DNA damage sites by catalyzing 'Lys-6'-linked ubiquitination of NBN. Also recruited at DNA interstrand cross-links (ICLs) sites and catalyzes 'Lys-63'-linked ubiquitination of histones H2A and H2AX, leading to recruitment of FAAP20/C1orf86 and Fanconi anemia (FA) complex, followed by interstrand cross-link repair. H2A ubiquitination also mediates the ATM-dependent transcriptional silencing at regions flanking DSBs in cis, a mechanism to avoid collision between transcription and repair intermediates. Promotes the formation of 'Lys-63'-linked polyubiquitin chains via interactions with the specific ubiquitin-conjugating UBE2N/UBC13 and ubiquitinates non-histone substrates such as PCNA. Substrates that are polyubiquitinated at 'Lys-63' are usually not targeted for degradation. Also catalyzes the formation of 'Lys-48'-linked polyubiquitin chains via interaction with the ubiquitin-conjugating UBE2L6/UBCH8, leading to degradation of substrate proteins such as CHEK2, JMJD2A/KDM4A and KU80/XRCC5: it is still unclear how the preference toward 'Lys-48'- versus 'Lys-63'-linked ubiquitination is regulated but it could be due to RNF8 ability to interact with specific E2 specific ligases. For instance, interaction with phosphorylated HERC2 promotes the association between RNF8 and UBE2N/UBC13 and favors the specific formation of 'Lys-63'-linked ubiquitin chains. Promotes non-homologous end joining (NHEJ) by promoting the 'Lys-48'-linked ubiquitination and degradation the of KU80/XRCC5. Following DNA damage, mediates the ubiquitination and degradation of JMJD2A/KDM4A in collaboration with RNF168, leading to unmask H4K20me2 mark and promote the recruitment of TP53BP1 at DNA damage sites. Following DNA damage, mediates the ubiquitination and degradation of POLD4/p12, a subunit of DNA polymerase delta. In the absence of POLD4, DNA polymerase delta complex exhibits higher proofreading activity. In addition to its function in damage signaling, also plays a role in higher-order chromatin structure by mediating extensive chromatin decondensation. Involved in the activation of ATM by promoting histone H2B ubiquitination, which indirectly triggers histone H4 'Lys-16' acetylation (H4K16ac), establishing a chromatin environment that promotes efficient activation of ATM kinase. Required in the testis, where it plays a role in the replacement of histones during spermatogenesis. At uncapped telomeres, promotes the joining of deprotected chromosome ends by inducing H2A ubiquitination and TP53BP1 recruitment, suggesting that it may enhance cancer development by aggravating telomere-induced genome instability in case of telomeric crisis. Promotes the assembly of RAD51 at DNA DSBs in the absence of BRCA1 and TP53BP1 Also involved in class switch recombination in immune system, via its role in regulation of DSBs repair. May be required for proper exit from mitosis after spindle checkpoint activation and may regulate cytokinesis. May play a role in the regulation of RXRA-mediated transcriptional activity. Not involved in RXRA ubiquitination by UBE2E2. The protein is E3 ubiquitin-protein ligase RNF8 of Homo sapiens (Human).